The sequence spans 1264 residues: BRCA2-interacting transcriptional repressor EMSY (1264 aa).

The segment at 1-442 is interaction with BRCA2; that stretch reads MPVVWPTLLD…LPKPVTATLP (442 aa). The ENT domain occupies 16 to 114; the sequence is CKRILRKLEL…EWSIEGRRLV (99 aa). The segment at 118–122 is interaction with ZMYND11; sequence PRLVP. The tract at residues 145–179 is disordered; that stretch reads PVPAETASKDGVSCSDEDEKPRKRRRTNSSSSSPV. Phosphothreonine is present on T171. A phosphoserine mark is found at S173 and S177. O-linked (GlcNAc) serine glycosylation is found at S192 and S200. A Phosphoserine modification is found at S202. A glycan (O-linked (GlcNAc) threonine) is linked at T235. A compositionally biased stretch (low complexity) spans 364–406; sequence FPKQHQQSPKQQLQQVQQQTQQPVAQPSSVSQQQQPQQSALPP. Residues 364–407 form a disordered region; it reads FPKQHQQSPKQQLQQVQQQTQQPVAQPSSVSQQQQPQQSALPPG. T465 and T470 each carry an O-linked (GlcNAc) threonine glycan. O-linked (GlcNAc) serine glycosylation occurs at S521. Positions 660 to 671 are enriched in polar residues; sequence SRVADASNSSAQ. The segment at 660 to 700 is disordered; that stretch reads SRVADASNSSAQEGKEEPQGYTDSSSSSTESSQSSQDSQPV. Residues 681-698 show a composition bias toward low complexity; sequence TDSSSSSTESSQSSQDSQ. S782 and S785 each carry phosphoserine. Residue T1069 is glycosylated (O-linked (GlcNAc) threonine). S1085 carries the post-translational modification Phosphoserine. The interval 1232 to 1264 is disordered; the sequence is QLDDDETAMEQDIDSSTEDGTEPSPSQSAVERS. Acidic residues predominate over residues 1233 to 1252; it reads LDDDETAMEQDIDSSTEDGT. Positions 1254–1264 are enriched in polar residues; the sequence is PSPSQSAVERS.

In terms of assembly, homodimer. Interacts with the transactivation domain of BRCA2. Interacts with CBX1 (via chromoshadow domain). Interacts with ZMYND11. Does not interact with CBX3 or CBX5. Component of a nuclear receptor-mediated transcription complex composed of at least ZNF335, CCAR2 and EMSY; the complex stimulates the transcription of nuclear receptor target genes such as SOX9 and HOXA1. Within the complex interacts with CCAR2 and ZNF335. Components of this complex may associate with components of a histone methylation complex to form a complex at least composed of ZNF335, HCFC1, CCAR2, EMSY, MKI67, RBBP5, ASH2L and WDR5. Within this complex, interacts with ASH2L and RBBP5.

Its subcellular location is the nucleus. Its function is as follows. Regulator which is able to repress transcription, possibly via its interaction with a multiprotein chromatin remodeling complex that modifies the chromatin. Its interaction with BRCA2 suggests that it may play a central role in the DNA repair function of BRCA2. Mediates ligand-dependent transcriptional activation by nuclear hormone receptors. The sequence is that of BRCA2-interacting transcriptional repressor EMSY from Mus musculus (Mouse).